We begin with the raw amino-acid sequence, 495 residues long: GTPase Der (495 aa).

2 consecutive EngA-type G domains span residues 3 to 166 and 208 to 381; these read PVVA…VQDE and IKLA…ACAT. GTP is bound by residues 9-16, 56-60, 118-121, 214-221, 261-265, and 326-329; these read GRPNVGKS, DTGGI, NKTD, DTAGV, and NKWD. One can recognise a KH-like domain in the interval 382–466; the sequence is RRVSTAMLTR…PIRIQFKEGE (85 aa).

This sequence belongs to the TRAFAC class TrmE-Era-EngA-EngB-Septin-like GTPase superfamily. EngA (Der) GTPase family. Associates with the 50S ribosomal subunit.

Its function is as follows. GTPase that plays an essential role in the late steps of ribosome biogenesis. The sequence is that of GTPase Der from Pectobacterium carotovorum subsp. carotovorum (strain PC1).